The chain runs to 1405 residues: DNA-directed RNA polymerase subunit beta' (1405 aa).

C70, C72, C85, and C88 together coordinate Zn(2+). Mg(2+) contacts are provided by D460, D462, and D464. Zn(2+) is bound by residues C814, C888, C895, and C898.

This sequence belongs to the RNA polymerase beta' chain family. The RNAP catalytic core consists of 2 alpha, 1 beta, 1 beta' and 1 omega subunit. When a sigma factor is associated with the core the holoenzyme is formed, which can initiate transcription. Mg(2+) is required as a cofactor. The cofactor is Zn(2+).

The enzyme catalyses RNA(n) + a ribonucleoside 5'-triphosphate = RNA(n+1) + diphosphate. In terms of biological role, DNA-dependent RNA polymerase catalyzes the transcription of DNA into RNA using the four ribonucleoside triphosphates as substrates. The polypeptide is DNA-directed RNA polymerase subunit beta' (Wigglesworthia glossinidia brevipalpis).